Consider the following 602-residue polypeptide: Bifunctional lycopene cyclase/phytoene synthase (602 aa).

Residues 1–238 (MLTYMEVHLY…LVFASCATDR (238 aa)) are lycopene beta-cyclase. The next 7 helical transmembrane spans lie at 7-27 (VHLYFTLPVLALLAFLYKPFF), 35-55 (YIFLCTVAFATASPWDNYIVY), 69-89 (VIGYVPLEEYMFFIIMTLITV), 110-130 (PVFQSVCVRYIPIVGFLTIAA), 142-162 (PFYGACILWYVCPVLALLWIG), 173-193 (AVLFSIAVPTIFLCWVDQYAI), and 211-231 (LPSLPLEEFLFFLLIDTVLVF). The phytoene synthase stretch occupies residues 245 to 602 (IYITPMNHNK…RGKSQAFTVI (358 aa)).

This sequence in the N-terminal section; belongs to the lycopene beta-cyclase family. In the C-terminal section; belongs to the phytoene/squalene synthase family.

It is found in the membrane. The enzyme catalyses all-trans-lycopene = gamma-carotene. It carries out the reaction gamma-carotene = all-trans-beta-carotene. The catalysed reaction is 2 (2E,6E,10E)-geranylgeranyl diphosphate = 15-cis-phytoene + 2 diphosphate. It participates in carotenoid biosynthesis; beta-carotene biosynthesis. The protein operates within carotenoid biosynthesis; phytoene biosynthesis; all-trans-phytoene from geranylgeranyl diphosphate: step 1/1. Bifunctional enzyme that catalyzes the reactions from geranylgeranyl diphosphate to phytoene (phytoene synthase) and lycopene to beta-carotene via the intermediate gamma-carotene (lycopene cyclase). This chain is Bifunctional lycopene cyclase/phytoene synthase, found in Phycomyces blakesleeanus (strain ATCC 8743b / DSM 1359 / FGSC 10004 / NBRC 33097 / NRRL 1555).